Consider the following 235-residue polypeptide: Orotidine 5'-phosphate decarboxylase (235 aa).

Substrate is bound by residues Asp-10, Lys-32, 59 to 68, Thr-123, Arg-184, Gln-193, Gly-213, and Arg-214; that span reads DLKLHDIPNT. The active-site Proton donor is Lys-61.

It belongs to the OMP decarboxylase family. Type 1 subfamily. Homodimer.

It carries out the reaction orotidine 5'-phosphate + H(+) = UMP + CO2. It functions in the pathway pyrimidine metabolism; UMP biosynthesis via de novo pathway; UMP from orotate: step 2/2. Catalyzes the decarboxylation of orotidine 5'-monophosphate (OMP) to uridine 5'-monophosphate (UMP). The chain is Orotidine 5'-phosphate decarboxylase from Paramagnetospirillum magneticum (strain ATCC 700264 / AMB-1) (Magnetospirillum magneticum).